The following is a 626-amino-acid chain: DNA mismatch repair protein MutL (626 aa).

This sequence belongs to the DNA mismatch repair MutL/HexB family.

Functionally, this protein is involved in the repair of mismatches in DNA. It is required for dam-dependent methyl-directed DNA mismatch repair. May act as a 'molecular matchmaker', a protein that promotes the formation of a stable complex between two or more DNA-binding proteins in an ATP-dependent manner without itself being part of a final effector complex. In Cellvibrio japonicus (strain Ueda107) (Pseudomonas fluorescens subsp. cellulosa), this protein is DNA mismatch repair protein MutL.